The primary structure comprises 496 residues: Aldehyde dehydrogenase (496 aa).

Residues Glu263 and Cys296 contribute to the active site.

The protein belongs to the aldehyde dehydrogenase family.

It is found in the cytoplasm. The enzyme catalyses an aldehyde + NAD(+) + H2O = a carboxylate + NADH + 2 H(+). This is Aldehyde dehydrogenase (CLAH10) from Davidiella tassiana (Mycosphaerella tassiana).